The following is a 149-amino-acid chain: Transcription antitermination protein NusB (149 aa).

This sequence belongs to the NusB family.

Involved in transcription antitermination. Required for transcription of ribosomal RNA (rRNA) genes. Binds specifically to the boxA antiterminator sequence of the ribosomal RNA (rrn) operons. This is Transcription antitermination protein NusB from Acinetobacter baumannii (strain SDF).